The following is a 288-amino-acid chain: Syntaxin PEP12 (288 aa).

Topologically, residues 1–268 (MSEDEFFGGD…RYQKRTSRWR (268 aa)) are cytoplasmic. Phosphoserine is present on residues S2 and S23. In terms of domain architecture, t-SNARE coiled-coil homology spans 195–257 (QNLIEQRDQE…QLASDELRKA (63 aa)). A helical; Anchor for type IV membrane protein membrane pass occupies residues 269 to 288 (VYLLIVLLVMLLFIFLIMKL).

It belongs to the syntaxin family. Post-translationally, ubiquitinated.

It is found in the membrane. Functionally, plays a role in the sorting and targeting of vacuolar proteases. The protein is Syntaxin PEP12 (PEP12) of Saccharomyces cerevisiae (strain ATCC 204508 / S288c) (Baker's yeast).